A 289-amino-acid polypeptide reads, in one-letter code: LBH domain-containing protein 1 (289 aa).

Disordered regions lie at residues 1-36 and 205-289; these read MALV…PLWD and EGAE…ASQD. The LBH domain maps to 1–128; sequence MALVPGRSKE…AEAFFQDQSE (128 aa). Residues 15 to 25 are compositionally biased toward polar residues; it reads TRNSPGSSQHP.

As to expression, expressed in bladder cancer tissues (at protein level).

In Homo sapiens (Human), this protein is LBH domain-containing protein 1.